We begin with the raw amino-acid sequence, 166 residues long: UPF0304 protein VS_1049 (166 aa).

It belongs to the UPF0304 family.

The protein is UPF0304 protein VS_1049 of Vibrio atlanticus (strain LGP32) (Vibrio splendidus (strain Mel32)).